Consider the following 88-residue polypeptide: Molybdopterin synthase sulfur carrier subunit (88 aa).

A 1-thioglycine; alternate modification is found at Gly88. A Glycyl adenylate; alternate modification is found at Gly88.

Belongs to the MoaD family. MOCS2A subfamily. In terms of assembly, heterotetramer; composed of 2 small (MOCS2A) and 2 large (MOCS2B) subunits. In terms of processing, C-terminal thiocarboxylation occurs in 2 steps, it is first acyl-adenylated (-COAMP) via the hesA/moeB/thiF part of uba4, then thiocarboxylated (-COSH) via the rhodanese domain of uba4.

Its subcellular location is the cytoplasm. It participates in cofactor biosynthesis; molybdopterin biosynthesis. Functionally, acts as a sulfur carrier required for molybdopterin biosynthesis. Component of the molybdopterin synthase complex that catalyzes the conversion of precursor Z into molybdopterin by mediating the incorporation of 2 sulfur atoms into precursor Z to generate a dithiolene group. In the complex, serves as sulfur donor by being thiocarboxylated (-COSH) at its C-terminus by uba4. After interaction with MOCS2B, the sulfur is then transferred to precursor Z to form molybdopterin. The protein is Molybdopterin synthase sulfur carrier subunit of Aspergillus niger (strain ATCC MYA-4892 / CBS 513.88 / FGSC A1513).